The chain runs to 272 residues: Soluble interferon gamma receptor OPG193 (272 aa).

Residues 1–13 form the signal peptide; that stretch reads MRYIIILAVLFIN. N-linked (GlcNAc...) asparagine; by host glycosylation is found at Asn-42, Asn-150, and Asn-267.

Belongs to the type II cytokine receptor family. Homodimer. Interacts with host IFNG.

It localises to the secreted. Its function is as follows. Counteracts the antiviral effects of host IFN-gamma. Acts as a soluble IFN-gamma receptor and thus inhibits the interaction between host IFN-gamma and its receptor. The polypeptide is Soluble interferon gamma receptor OPG193 (OPG193) (Homo sapiens (Human)).